A 137-amino-acid chain; its full sequence is Large ribosomal subunit protein uL16 (137 aa).

It belongs to the universal ribosomal protein uL16 family. In terms of assembly, part of the 50S ribosomal subunit.

In terms of biological role, binds 23S rRNA and is also seen to make contacts with the A and possibly P site tRNAs. The protein is Large ribosomal subunit protein uL16 of Endomicrobium trichonymphae.